The sequence spans 208 residues: Inactive ribonuclease-like protein 10 (208 aa).

The N-terminal stretch at 1 to 24 is a signal peptide; it reads MKVTLVHLLFMMLLLLLGLGLGLG. 2 N-linked (GlcNAc...) asparagine glycosylation sites follow: N125 and N147.

Belongs to the pancreatic ribonuclease family. In terms of processing, the N-terminus is blocked. Glycosylated. In terms of tissue distribution, male-specific expression in proximal caput of the epididymis (at protein level).

The protein resides in the secreted. Secreted proximal epididymal protein required for post-testicular sperm maturation and male fertility. May be involved in sperm adhesion to the egg zona pellucida. Does not have ribonuclease activity. In Mus musculus (Mouse), this protein is Inactive ribonuclease-like protein 10 (Rnase10).